A 200-amino-acid polypeptide reads, in one-letter code: Riboflavin synthase (200 aa).

Lumazine-binding repeat units follow at residues 1–97 and 98–190; these read MFSG…IGGH and LLSG…VDTV. Residues 4–6, 48–50, 62–67, 101–103, lysine 132, 141–143, and 155–160 contribute to the 2,4-dihydroxypteridine site; these read GII, CLT, DVIPET, GHV, SLT, and GLIPET.

In terms of assembly, homotrimer.

It carries out the reaction 2 6,7-dimethyl-8-(1-D-ribityl)lumazine + H(+) = 5-amino-6-(D-ribitylamino)uracil + riboflavin. It functions in the pathway cofactor biosynthesis; riboflavin biosynthesis; riboflavin from 2-hydroxy-3-oxobutyl phosphate and 5-amino-6-(D-ribitylamino)uracil: step 2/2. In terms of biological role, catalyzes the dismutation of two molecules of 6,7-dimethyl-8-ribityllumazine, resulting in the formation of riboflavin and 5-amino-6-(D-ribitylamino)uracil. The protein is Riboflavin synthase (ribE) of Chlamydia pneumoniae (Chlamydophila pneumoniae).